The sequence spans 397 residues: Putative F-box protein At1g26510 (397 aa).

The interval 1–23 is disordered; sequence MRTRSKKTKTVNNNNDLQKSEEK. Positions 24–71 constitute an F-box domain; it reads QKFDQLPLDLEIEMFRRLPLKSVARFLTLSKSCATTIRSPSFITSFPS.

The protein is Putative F-box protein At1g26510 of Arabidopsis thaliana (Mouse-ear cress).